The primary structure comprises 476 residues: Glycogen synthase (476 aa).

ADP-alpha-D-glucose is bound at residue Lys15.

It belongs to the glycosyltransferase 1 family. Bacterial/plant glycogen synthase subfamily.

It carries out the reaction [(1-&gt;4)-alpha-D-glucosyl](n) + ADP-alpha-D-glucose = [(1-&gt;4)-alpha-D-glucosyl](n+1) + ADP + H(+). The protein operates within glycan biosynthesis; glycogen biosynthesis. Its function is as follows. Synthesizes alpha-1,4-glucan chains using ADP-glucose. The sequence is that of Glycogen synthase from Haemophilus influenzae (strain PittEE).